A 310-amino-acid polypeptide reads, in one-letter code: Nucleotide-binding protein BLA_1368 (310 aa).

The segment at 1–21 is disordered; sequence MQSARNEQRGTGPESPHAASP. 32–39 provides a ligand contact to ATP; that stretch reads GMSGAGRS. 83–86 is a GTP binding site; sequence DVRS.

The protein belongs to the RapZ-like family.

Functionally, displays ATPase and GTPase activities. The chain is Nucleotide-binding protein BLA_1368 from Bifidobacterium animalis subsp. lactis (strain AD011).